A 420-amino-acid chain; its full sequence is Glutamyl-tRNA reductase (420 aa).

Substrate contacts are provided by residues Thr-49–Arg-52, Ser-107, Glu-112–Gln-114, and Gln-118. Cys-50 (nucleophile) is an active-site residue. Gly-187 to Ile-192 contacts NADP(+).

It belongs to the glutamyl-tRNA reductase family. Homodimer.

It catalyses the reaction (S)-4-amino-5-oxopentanoate + tRNA(Glu) + NADP(+) = L-glutamyl-tRNA(Glu) + NADPH + H(+). It participates in porphyrin-containing compound metabolism; protoporphyrin-IX biosynthesis; 5-aminolevulinate from L-glutamyl-tRNA(Glu): step 1/2. Functionally, catalyzes the NADPH-dependent reduction of glutamyl-tRNA(Glu) to glutamate 1-semialdehyde (GSA). The polypeptide is Glutamyl-tRNA reductase (Methylococcus capsulatus (strain ATCC 33009 / NCIMB 11132 / Bath)).